The following is a 146-amino-acid chain: Transcriptional regulator MraZ (146 aa).

SpoVT-AbrB domains lie at 7-54 and 83-126; these read HVTN…GPEL and GVYV…DPQA.

It belongs to the MraZ family. In terms of assembly, forms oligomers.

It is found in the cytoplasm. It localises to the nucleoid. The sequence is that of Transcriptional regulator MraZ from Rhizobium meliloti (strain 1021) (Ensifer meliloti).